A 455-amino-acid chain; its full sequence is Eukaryotic translation initiation factor 3 subunit E (455 aa).

The PCI domain maps to 256-425 (TDLFFSPAYI…GTVIMNHPPQ (170 aa)).

The protein belongs to the eIF-3 subunit E family. Component of the eukaryotic translation initiation factor 3 (eIF-3) complex.

The protein resides in the cytoplasm. Functionally, component of the eukaryotic translation initiation factor 3 (eIF-3) complex, which is involved in protein synthesis of a specialized repertoire of mRNAs and, together with other initiation factors, stimulates binding of mRNA and methionyl-tRNAi to the 40S ribosome. The eIF-3 complex specifically targets and initiates translation of a subset of mRNAs involved in cell proliferation. This is Eukaryotic translation initiation factor 3 subunit E (int6) from Neosartorya fischeri (strain ATCC 1020 / DSM 3700 / CBS 544.65 / FGSC A1164 / JCM 1740 / NRRL 181 / WB 181) (Aspergillus fischerianus).